We begin with the raw amino-acid sequence, 142 residues long: Hemoglobin subunit alpha-A (142 aa).

Positions 2–142 (VLSANDKTNV…VGNVLTAKYR (141 aa)) constitute a Globin domain. H59 lines the O2 pocket. Residue H88 participates in heme b binding.

The protein belongs to the globin family. As to quaternary structure, heterotetramer of two alpha chains and two beta chains. Red blood cells.

In terms of biological role, involved in oxygen transport from the lung to the various peripheral tissues. The sequence is that of Hemoglobin subunit alpha-A (HBAA) from Aegypius monachus (Cinereous vulture).